Reading from the N-terminus, the 301-residue chain is D-alanine--D-alanine ligase (301 aa).

Positions 101–296 (KLMWRAAGLA…YPTLVRRVLE (196 aa)) constitute an ATP-grasp domain. Residue 127-182 (EEELGLPLFVKPAREGSSIGVTKVKERGALKAAYEEAARHDPLVIAEKGVMGGEYT) participates in ATP binding. Mg(2+) is bound by residues D250, E263, and N265.

Belongs to the D-alanine--D-alanine ligase family. Requires Mg(2+) as cofactor. Mn(2+) is required as a cofactor.

It localises to the cytoplasm. The catalysed reaction is 2 D-alanine + ATP = D-alanyl-D-alanine + ADP + phosphate + H(+). The protein operates within cell wall biogenesis; peptidoglycan biosynthesis. Cell wall formation. The sequence is that of D-alanine--D-alanine ligase from Dechloromonas aromatica (strain RCB).